Consider the following 720-residue polypeptide: uncharacterized protein (720 aa).

Gly2 carries N-myristoyl glycine; by host lipidation.

This is an uncharacterized protein from Cryphonectria parasitica mycoreovirus 1 (strain 9B21) (CpMYRV-1).